The primary structure comprises 523 residues: NADH-ubiquinone oxidoreductase chain 2 (523 aa).

Helical transmembrane passes span 3-23 (LFGVLTMILAIALFSLRIPAI), 30-50 (IILLLFSALLSYNSLYMNNIG), 62-82 (VTTITQSIDVFIYLLGALVLL), 110-130 (SVLAEYPLIALFSVLGMSSLI), 135-155 (LISMFLSIELQSFAVYILATI), 170-190 (FLLGSLSSALILLGSSLLYSF), 212-232 (IEISVLLIMVGLLFKVSAAPF), 246-266 (VVTTWLTTMPKIAFLVFILEF), 281-301 (LLLISSLLSLLIGTIGGLAQY), 306-326 (LLTYSTISHVGFLLLALAINN), 333-353 (FLFYLIQYSLTNINVFFILVA), 386-406 (GLSLAICLFSMAGIPPLVGFF), 419-439 (GNFFLAFVAILVSVVSAAYYL), and 490-510 (LVIATITLLLIFFIINPTPLL).

It belongs to the complex I subunit 2 family.

Its subcellular location is the mitochondrion inner membrane. It carries out the reaction a ubiquinone + NADH + 5 H(+)(in) = a ubiquinol + NAD(+) + 4 H(+)(out). Core subunit of the mitochondrial membrane respiratory chain NADH dehydrogenase (Complex I) that is believed to belong to the minimal assembly required for catalysis. Complex I functions in the transfer of electrons from NADH to the respiratory chain. The immediate electron acceptor for the enzyme is believed to be ubiquinone. In Rhizopus oryzae (Mucormycosis agent), this protein is NADH-ubiquinone oxidoreductase chain 2.